A 212-amino-acid polypeptide reads, in one-letter code: Thymidylate kinase (212 aa).

An ATP-binding site is contributed by 11–18 (GPEGAGKS).

Belongs to the thymidylate kinase family.

It carries out the reaction dTMP + ATP = dTDP + ADP. In terms of biological role, phosphorylation of dTMP to form dTDP in both de novo and salvage pathways of dTTP synthesis. The sequence is that of Thymidylate kinase from Streptococcus sanguinis (strain SK36).